The sequence spans 175 residues: SKP1-like protein 20 (175 aa).

Residues Ile-117 to Glu-175 form an interaction with the F-box domain of F-box proteins region.

Belongs to the SKP1 family. In terms of assembly, part of a SCF (SKP1-CUL1-F-box protein) E3 ubiquitin-protein ligase complex. Interacts with rice black streaked dwarf virus RBSDV protein P7-2. Is able to form the SCF complex together with CUL1 and the viral P7-2 protein. Interacts with D3.

The protein localises to the nucleus. It functions in the pathway protein modification; protein ubiquitination. In terms of biological role, involved in ubiquitination and subsequent proteasomal degradation of target proteins. Together with CUL1, a RING-box and a F-box protein, it forms a SCF E3 ubiquitin ligase complex. The functional specificity of this complex depends on the type of F-box protein. In the SCF complex, it serves as an adapter that links the F-box protein to CUL1. The polypeptide is SKP1-like protein 20 (Oryza sativa subsp. japonica (Rice)).